The sequence spans 725 residues: N-alpha-acetyltransferase 35, NatC auxiliary subunit (725 aa).

Ser-187 carries the post-translational modification Phosphoserine. Positions 548–573 are disordered; sequence ERIMEEQQKGRSSKKTKKKKKVRPLS. The span at 558 to 571 shows a compositional bias: basic residues; sequence RSSKKTKKKKKVRP.

The protein belongs to the MAK10 family. Component of the N-terminal acetyltransferase C (NatC) complex, which is composed of NAA35, NAA38 and NAA30.

The protein resides in the cytoplasm. In terms of biological role, auxillary component of the N-terminal acetyltransferase C (NatC) complex which catalyzes acetylation of N-terminal methionine residues. N-terminal acetylation protects proteins from ubiquitination and degradation by the N-end rule pathway. Involved in regulation of apoptosis and proliferation of smooth muscle cells. The chain is N-alpha-acetyltransferase 35, NatC auxiliary subunit (NAA35) from Homo sapiens (Human).